The primary structure comprises 114 residues: Cystatin Pr15a (114 aa).

An N-terminal signal peptide occupies residues 1-22 (MFTVKLLAFMVVAVSLQHLAEA). Residues 29-83 (GCPVEVDPNREDIKKSLAHVMAAKNSPDELVRIIKASTQVVNGIKYKVVFEVKNP) enclose the Cystatin domain.

Belongs to the cystatin family. Expressed by the venom gland (anterior main gland) (at protein level).

The protein localises to the secreted. This is Cystatin Pr15a from Platymeris rhadamanthus (Red spot assassin bug).